The sequence spans 89 residues: LYR motif-containing protein 4 (89 aa).

The protein belongs to the complex I LYR family.

Its subcellular location is the mitochondrion. The protein localises to the nucleus. Its pathway is cofactor biosynthesis; iron-sulfur cluster biosynthesis. Its function is as follows. Required for nuclear and mitochondrial iron-sulfur protein biosynthesis. In Xenopus laevis (African clawed frog), this protein is LYR motif-containing protein 4 (lyrm4).